Reading from the N-terminus, the 389-residue chain is Galactose-1-phosphate uridylyltransferase (389 aa).

This sequence belongs to the galactose-1-phosphate uridylyltransferase type 2 family.

The protein resides in the cytoplasm. It catalyses the reaction alpha-D-galactose 1-phosphate + UDP-alpha-D-glucose = alpha-D-glucose 1-phosphate + UDP-alpha-D-galactose. It participates in carbohydrate metabolism; galactose metabolism. The chain is Galactose-1-phosphate uridylyltransferase (galT) from Butyrivibrio fibrisolvens.